The sequence spans 494 residues: Probable cytosol aminopeptidase (494 aa).

Mn(2+)-binding residues include lysine 260 and aspartate 265. Lysine 272 is a catalytic residue. Mn(2+) contacts are provided by aspartate 283, aspartate 342, and glutamate 344. Residue arginine 346 is part of the active site.

The protein belongs to the peptidase M17 family. It depends on Mn(2+) as a cofactor.

The protein resides in the cytoplasm. It catalyses the reaction Release of an N-terminal amino acid, Xaa-|-Yaa-, in which Xaa is preferably Leu, but may be other amino acids including Pro although not Arg or Lys, and Yaa may be Pro. Amino acid amides and methyl esters are also readily hydrolyzed, but rates on arylamides are exceedingly low.. It carries out the reaction Release of an N-terminal amino acid, preferentially leucine, but not glutamic or aspartic acids.. Presumably involved in the processing and regular turnover of intracellular proteins. Catalyzes the removal of unsubstituted N-terminal amino acids from various peptides. The sequence is that of Probable cytosol aminopeptidase from Bacillus anthracis (strain CDC 684 / NRRL 3495).